Consider the following 160-residue polypeptide: MKSIAVYPGSFDPFTNGHLDIIRRAHPLFEEIIIAVAINSKKTSLFSPEERVEMIGKVFHGWDKIKIDTFEGLTVDYCKEKNSRVILRGLRAVTDFDYEYAISLMNKKLAPEIETYFLMADNEYSFVSSTIVKEVARHGRAVSNQVPDVVGEALVKKFSV.

Serine 10 provides a ligand contact to substrate. ATP is bound by residues 10–11 (SF) and histidine 18. Lysine 42, threonine 74, and arginine 88 together coordinate substrate. Residues 89–91 (GLR), glutamate 99, and 124–130 (YSFVSST) contribute to the ATP site.

It belongs to the bacterial CoaD family. As to quaternary structure, homohexamer. It depends on Mg(2+) as a cofactor.

The protein localises to the cytoplasm. The enzyme catalyses (R)-4'-phosphopantetheine + ATP + H(+) = 3'-dephospho-CoA + diphosphate. Its pathway is cofactor biosynthesis; coenzyme A biosynthesis; CoA from (R)-pantothenate: step 4/5. Its function is as follows. Reversibly transfers an adenylyl group from ATP to 4'-phosphopantetheine, yielding dephospho-CoA (dPCoA) and pyrophosphate. This is Phosphopantetheine adenylyltransferase from Leptospira biflexa serovar Patoc (strain Patoc 1 / Ames).